The sequence spans 175 residues: Gamma-crystallin B (175 aa).

2 consecutive Beta/gamma crystallin 'Greek key' domains span residues G2–S40 and G41–P83. Positions Q84–T88 are connecting peptide. Beta/gamma crystallin 'Greek key' domains are found at residues Y89–E129 and G130–M172.

Belongs to the beta/gamma-crystallin family.

Crystallins are the dominant structural components of the vertebrate eye lens. The protein is Gamma-crystallin B (Crygb) of Rattus norvegicus (Rat).